A 198-amino-acid chain; its full sequence is MTLESYAGDVHTVPQSENSMEERGGGELFVPPLNFAMVDNGIFRSGFPEPVSFSFLQSLRLKSIIYLCPEAYPEVNREFAKSNGIQVFQFGIERCKEPFVNIPDEVIREALQVLLDTENHPVLIHCKSGKHRTGCLVGCVRKIQRWCLSSIFDEYQRFAAAKARISDQRFMELFDISNLKHTPLSFSCSKRYTNTIDY.

The segment at 1–23 (MTLESYAGDVHTVPQSENSMEER) is disordered. Positions 34–188 (NFAMVDNGIF…LKHTPLSFSC (155 aa)) constitute a Tyrosine-protein phosphatase domain. Residues 90–102 (FGIERCKEPFVNI) are WPD loop important for active site topology. 1D-myo-inositol hexakisphosphate contacts are provided by asparagine 101 and isoleucine 102. The Phosphocysteine intermediate role is filled by cysteine 126.

This sequence belongs to the protein-tyrosine phosphatase family. Atypical dual-specificity phosphatase Siw14-like subfamily. As to expression, highly expressed in flowers and at lower levels in roots, leaves, stems and siliques.

It catalyses the reaction 5-diphospho-1D-myo-inositol 1,2,3,4,6-pentakisphosphate + H2O = 1D-myo-inositol hexakisphosphate + phosphate + H(+). The enzyme catalyses 1,5-bis(diphospho)-1D-myo-inositol 2,3,4,6-tetrakisphosphate + H2O = 1-diphospho-1D-myo-inositol 2,3,4,5,6-pentakisphosphate + phosphate + 2 H(+). The catalysed reaction is 3,5-bis(diphospho)-1D-myo-inositol 1,2,4,6-tetrakisphosphate + H2O = 3-diphospho-1D-myo-inositol 1,2,4,5,6-pentakisphosphate + phosphate + 2 H(+). It carries out the reaction 6-diphospho-1D-myo-inositol pentakisphosphate + H2O = 1D-myo-inositol hexakisphosphate + phosphate + H(+). Functionally, cleaves the beta-phosphate at the 5-position of soluble inositol pyrophosphates. Has highest activity on 5-diphosphoinositol 1,2,3,4,6-pentakisphosphate (5-InsP(7)), 1,5-bis-diphosphoinositol 2,3,4,6-tetrakisphosphate (1,5-InsP(8)) and 3,5-InsP(8). Acts as a negative regulator of defense responses against the bacterial pathogen Pseudomonas syringae pv tomato strain DC3000. The polypeptide is Inositol diphosphatase DSP4 (Arabidopsis thaliana (Mouse-ear cress)).